A 262-amino-acid polypeptide reads, in one-letter code: Adenosylcobinamide-GDP ribazoletransferase (262 aa).

A run of 6 helical transmembrane segments spans residues 43–63 (YFGL…WLTQ), 66–86 (LPAG…TGGF), 120–140 (GALA…ELAL), 146–166 (AGSA…SIIF), 191–211 (LLIL…LAAL), and 242–262 (AAQQ…GNIL).

The protein belongs to the CobS family. It depends on Mg(2+) as a cofactor.

Its subcellular location is the cell inner membrane. The enzyme catalyses alpha-ribazole + adenosylcob(III)inamide-GDP = adenosylcob(III)alamin + GMP + H(+). It carries out the reaction alpha-ribazole 5'-phosphate + adenosylcob(III)inamide-GDP = adenosylcob(III)alamin 5'-phosphate + GMP + H(+). It functions in the pathway cofactor biosynthesis; adenosylcobalamin biosynthesis; adenosylcobalamin from cob(II)yrinate a,c-diamide: step 7/7. Its function is as follows. Joins adenosylcobinamide-GDP and alpha-ribazole to generate adenosylcobalamin (Ado-cobalamin). Also synthesizes adenosylcobalamin 5'-phosphate from adenosylcobinamide-GDP and alpha-ribazole 5'-phosphate. This is Adenosylcobinamide-GDP ribazoletransferase from Shewanella baltica (strain OS195).